The chain runs to 385 residues: tRNA-specific 2-thiouridylase MnmA (385 aa).

Residues 12–19 (GLSGGVDS) and Met-38 each bind ATP. The interval 108 to 110 (NPD) is interaction with target base in tRNA. Catalysis depends on Cys-113, which acts as the Nucleophile. A disulfide bond links Cys-113 and Cys-210. Gly-138 is an ATP binding site. The interaction with tRNA stretch occupies residues 160–162 (KDQ). Residue Cys-210 is the Cysteine persulfide intermediate of the active site.

It belongs to the MnmA/TRMU family.

It localises to the cytoplasm. The catalysed reaction is S-sulfanyl-L-cysteinyl-[protein] + uridine(34) in tRNA + AH2 + ATP = 2-thiouridine(34) in tRNA + L-cysteinyl-[protein] + A + AMP + diphosphate + H(+). Catalyzes the 2-thiolation of uridine at the wobble position (U34) of tRNA, leading to the formation of s(2)U34. The protein is tRNA-specific 2-thiouridylase MnmA of Ureaplasma parvum serovar 3 (strain ATCC 27815 / 27 / NCTC 11736).